The primary structure comprises 2514 residues: Highly reducing polyketide synthase sphB (2514 aa).

Residues 66–486 (QVPIAICGMA…GANAHVILES (421 aa)) form the Ketosynthase family 3 (KS3) domain. Residues Cys238, His374, and His409 each act as for beta-ketoacyl synthase activity in the active site. The region spanning 580–904 (MVFTGQGAQW…AIGALHSLNV (325 aa)) is the Malonyl-CoA:ACP transacylase (MAT) domain. The segment at 950–1079 (HDLLGARVAE…GEVCAQSSAP (130 aa)) is N-terminal hotdog fold. One can recognise a PKS/mFAS DH domain in the interval 950–1240 (HDLLGARVAE…AADISDTHAA (291 aa)). His982 serves as the catalytic Proton acceptor; for dehydratase activity. Positions 1089–1240 (PRTLNVRKWY…AADISDTHAA (152 aa)) are C-terminal hotdog fold. Residue Asp1150 is the Proton donor; for dehydratase activity of the active site. The tract at residues 1319–1578 (WTGLDHEAIS…EPHQVTTTMV (260 aa)) is methyltransferase (CMet) domain. An Enoyl reductase (ER) domain is found at 1779 to 2092 (GRVNSLHYAR…KGQHIGRVGV (314 aa)). Positions 2120–2297 (ASYLMVGGLG…ASVVDMGAVE (178 aa)) constitute a Ketoreductase (KR) domain. One can recognise a Carrier domain in the interval 2427–2504 (EAAKLFAVEI…ILGQYAANEV (78 aa)). O-(pantetheine 4'-phosphoryl)serine is present on Ser2464.

Pantetheine 4'-phosphate is required as a cofactor.

It catalyses the reaction holo-[ACP] + 8 malonyl-CoA + acetyl-CoA + 5 AH2 + 8 NADPH + 16 H(+) = (3R)-hydroxyoctadeca-4,10-dienoyl-[ACP] + 5 A + 8 CO2 + 8 NADP(+) + 9 CoA + 7 H2O. Its pathway is secondary metabolite biosynthesis. Highly reducing polyketide synthase; part of the gene cluster that mediates the biosynthesis of sphingofungins, bioactive molecules acting as sphingolipid inhibitors via inhibiting serine palmitoyl transferase (SPT). Within the pathway, sphB catalyzes the first step of sphingofungin biosynthesis by condensing 8 units of malonyl-CoA with one starter unit of acetyl-CoA, leading to an C18 polyketide precursor 3-hydroxyoctadeca-4,10-dienoyl-ACP containing one delta-6 desaturation and one delta-12 desaturation. The PKS sphB does not contain any putative thioesterase domain for releasing the nascent polyketide chain and it has been suggested that aminoacyl transferases can facilitate the polyketide chain release. The aminoacyl transferase sphA uses the sphB product to produce 3-keto-presphingofungin by adding an aminomalonate molecule. SphF then reduces the C-3 ketone of 3-keto-presphingofungin which leads to presphingofungin. The cytochrome P450 monooxygenase sphH converts presphingofungin into sphingofungin B1 which is further converted to sphingofungin B by the dioxygenase sphC. SphC is also able to convert presphingofungin into sphingofungin B2. The acetyltransferase sphE acetylates sphingofungin B to produce sphingofungin C, but can also convert sphingofungin B1 into sphingofungin C1 and sphingofungin B2 into sphingofungin C2. Finally, sphingofungin C can be spontaneously converted into sphingofungin D. This is Highly reducing polyketide synthase sphB from Aspergillus fumigatus (strain CBS 144.89 / FGSC A1163 / CEA10) (Neosartorya fumigata).